The following is a 355-amino-acid chain: Peptide chain release factor 1 (355 aa).

Q233 is subject to N5-methylglutamine.

Belongs to the prokaryotic/mitochondrial release factor family. In terms of processing, methylated by PrmC. Methylation increases the termination efficiency of RF1.

It localises to the cytoplasm. Its function is as follows. Peptide chain release factor 1 directs the termination of translation in response to the peptide chain termination codons UAG and UAA. The sequence is that of Peptide chain release factor 1 from Desulfitobacterium hafniense (strain DSM 10664 / DCB-2).